We begin with the raw amino-acid sequence, 394 residues long: Phosphoglycerate kinase (394 aa).

Residues 21 to 23 (DFN), Arg36, 59 to 62 (HLGR), Arg118, and Arg151 each bind substrate. Position 183 is a phosphoserine (Ser183). Positions 201 and 292 each coordinate ATP. The residue at position 299 (Thr299) is a Phosphothreonine. Residues Glu323 and 350–353 (GGDS) contribute to the ATP site.

The protein belongs to the phosphoglycerate kinase family. Monomer.

Its subcellular location is the cytoplasm. The enzyme catalyses (2R)-3-phosphoglycerate + ATP = (2R)-3-phospho-glyceroyl phosphate + ADP. It participates in carbohydrate degradation; glycolysis; pyruvate from D-glyceraldehyde 3-phosphate: step 2/5. The polypeptide is Phosphoglycerate kinase (Bacillus mycoides (strain KBAB4) (Bacillus weihenstephanensis)).